The sequence spans 297 residues: uncharacterized protein (297 aa).

Helical transmembrane passes span F26–I48, N80–F102, L134–G156, L185–I205, L225–Y247, and L262–Y284.

It localises to the cell membrane. This is an uncharacterized protein from Archaeoglobus fulgidus (strain ATCC 49558 / DSM 4304 / JCM 9628 / NBRC 100126 / VC-16).